Reading from the N-terminus, the 62-residue chain is Large ribosomal subunit protein eL24 (62 aa).

Residues Cys6, Cys9, Cys32, and Cys36 each coordinate Zn(2+). The C4-type zinc finger occupies 6-36 (CYFCGKMLEPGTGKLYVKKDGSTYFMCSSKC).

Belongs to the eukaryotic ribosomal protein eL24 family. In terms of assembly, part of the 50S ribosomal subunit. Forms a cluster with proteins L3 and L14. Zn(2+) is required as a cofactor.

Its function is as follows. Binds to the 23S rRNA. In Methanosarcina acetivorans (strain ATCC 35395 / DSM 2834 / JCM 12185 / C2A), this protein is Large ribosomal subunit protein eL24.